Reading from the N-terminus, the 197-residue chain is Ion-translocating oxidoreductase complex subunit B (197 aa).

Residues 1-26 (MSIVIIAVLALSALALTFGAVLGFAS) form a hydrophobic region. In terms of domain architecture, 4Fe-4S spans 32–90 (EGNPIVDQIDGLLPQTQCGQCGYPGCRPYAEAIANGDAINKCPPGGEATITALADLLDV). The [4Fe-4S] cluster site is built by Cys49, Cys52, Cys57, Cys73, Cys115, Cys118, Cys121, Cys125, Cys145, Cys148, Cys151, and Cys155. 2 4Fe-4S ferredoxin-type domains span residues 106–135 (QVAYIREDECIGCTKCIQACPVDAILGAAK) and 136–165 (QMHTVIVSECTGCDLCVEPCPVDCIDMIPA).

It belongs to the 4Fe4S bacterial-type ferredoxin family. RnfB subfamily. As to quaternary structure, the complex is composed of six subunits: RnfA, RnfB, RnfC, RnfD, RnfE and RnfG. [4Fe-4S] cluster is required as a cofactor.

It localises to the cell inner membrane. Functionally, part of a membrane-bound complex that couples electron transfer with translocation of ions across the membrane. This chain is Ion-translocating oxidoreductase complex subunit B, found in Hahella chejuensis (strain KCTC 2396).